A 321-amino-acid chain; its full sequence is Probable 1-aminocyclopropane-1-carboxylate oxidase (321 aa).

The region spanning 159–259 (PTFGTKVSNY…RMSIASFYNP (101 aa)) is the Fe2OG dioxygenase domain. Positions 183, 185, and 240 each coordinate Fe cation.

It belongs to the iron/ascorbate-dependent oxidoreductase family. Fe cation is required as a cofactor.

The enzyme catalyses 1-aminocyclopropane-1-carboxylate + L-ascorbate + O2 = ethene + L-dehydroascorbate + hydrogen cyanide + CO2 + 2 H2O. It participates in alkene biosynthesis; ethylene biosynthesis via S-adenosyl-L-methionine; ethylene from S-adenosyl-L-methionine: step 2/2. This chain is Probable 1-aminocyclopropane-1-carboxylate oxidase (ACO), found in Dianthus caryophyllus (Carnation).